The following is a 206-amino-acid chain: Methyltransferase-like 26 (206 aa).

It belongs to the UPF0585 family.

The chain is Methyltransferase-like 26 from Danio rerio (Zebrafish).